A 188-amino-acid chain; its full sequence is MSVKIRLQRHGKKGKPFYWVVAADARSKRDGKYLEKIGTYNPNTNPATVELNLDSAVKWLHNGAQPTDTARAILSYKGALLKHHLDGGVRKGALTQEQADAKLTAWLEAKAGKVDAKKDGLSKAQADAKAKALKAEKEVNDKRIAAAAKAEADAIAAASATEEAATEEVAEAAEEAPAAEENNETTEA.

Residues 155–188 (IAAASATEEAATEEVAEAAEEAPAAEENNETTEA) form a disordered region. The segment covering 164–188 (AATEEVAEAAEEAPAAEENNETTEA) has biased composition (acidic residues).

It belongs to the bacterial ribosomal protein bS16 family.

This is Small ribosomal subunit protein bS16 from Flavobacterium johnsoniae (strain ATCC 17061 / DSM 2064 / JCM 8514 / BCRC 14874 / CCUG 350202 / NBRC 14942 / NCIMB 11054 / UW101) (Cytophaga johnsonae).